We begin with the raw amino-acid sequence, 723 residues long: Delta-like protein 1 (723 aa).

Residues 1–17 form the signal peptide; sequence MGSRCALALAVLSALLC. Residues 18 to 545 are Extracellular-facing; sequence QVWSSGVFEL…LEGQGGPFPW (528 aa). Positions 177–221 constitute a DSL domain; that stretch reads FVCDEHYYGEGCSVFCRPRDDAFGHFTCGERGEKVCNPGWKGPYC. 27 disulfides stabilise this stretch: Cys-179/Cys-188, Cys-192/Cys-204, Cys-212/Cys-221, Cys-226/Cys-237, Cys-230/Cys-243, Cys-245/Cys-254, Cys-257/Cys-268, Cys-263/Cys-274, Cys-276/Cys-285, Cys-292/Cys-304, Cys-298/Cys-314, Cys-316/Cys-325, Cys-332/Cys-343, Cys-337/Cys-352, Cys-354/Cys-363, Cys-370/Cys-381, Cys-375/Cys-391, Cys-393/Cys-402, Cys-409/Cys-420, Cys-414/Cys-429, Cys-431/Cys-440, Cys-447/Cys-458, Cys-452/Cys-467, Cys-469/Cys-478, Cys-485/Cys-496, Cys-490/Cys-505, and Cys-507/Cys-516. 3 EGF-like domains span residues 226–254, 257–285, and 292–325; these read CLPG…GRYC, CIRY…GLFC, and CTHH…GATC. Residues 332–363 enclose the EGF-like 4; calcium-binding domain; the sequence is CDPSPCKNGGSCTDLENSYSCTCPPGFYGKIC. 2 EGF-like domains span residues 370–402 and 409–440; these read CADG…GFNC and CSSS…GRHC. Residues 447–478 form the EGF-like 7; calcium-binding domain; it reads CASSPCANGGTCRDGVNDFSCTCPPGYTGRNC. N-linked (GlcNAc...) asparagine glycosylation is present at Asn-477. The EGF-like 8 domain maps to 485–516; sequence CEHAPCHNGATCHERGHRYVCECARGYGGPNC. A helical membrane pass occupies residues 546–568; sequence VAVCAGVILVLMLLLGCAAVVVC. Over 569–723 the chain is Cytoplasmic; sequence VRLRLQKHRP…KDECVIATEV (155 aa). Lys-613 participates in a covalent cross-link: Glycyl lysine isopeptide (Lys-Gly) (interchain with G-Cter in ubiquitin). A compositionally biased stretch (basic and acidic residues) spans 653–664; sequence AVRDAHSKRDTK. Residues 653-702 are disordered; sequence AVRDAHSKRDTKCQPQGSSGEEKGTPTTLRGGEASERKRPDSGCSTSKDT. A Phosphoserine; by PKB modification is found at Ser-694. Position 697 is a phosphoserine (Ser-697). The interval 720 to 723 is interaction with MAGI1; it reads ATEV.

Homodimer. Interacts with TJP1. Interacts with MAGI1 (via PDZ domain); forms a complex with CTNNB1 and CDH2 and promotes recruitment to the adherens junction and stabilization on the cell surface. Interacts with PSEN1; undergoes a presenilin-dependent gamma-secretase cleavage that releases a Dll1-intracellular form. Interacts with MFAP5. Interacts with MIB1. Interacts with NEURL1B; leads to ubiquitination. Interacts with NEURL1. Interacts with SYNJ2BP; enhances DLL1 protein stability, and promotes Notch signaling in endothelial cells. Interacts with MAGI1, MAGI2, MAGI3 and MPDZ. Interacts (via ubiquitin) with EPN1 (via IUM domain); binding with NOTCH1 attached to neighboring cell, promotes ligand ubiquitination and EPN1 interaction, leading to NECD transendocytosis and Notch signaling. Interacts with NOTCH1. Interacts with NOTCH2NLB; leading to promote Notch signaling pathway in a cell-autonomous manner through inhibition of cis DLL1-NOTCH2 interactions. In terms of processing, ubiquitinated by MIB (MIB1 or MIB2), leading to its endocytosis and subsequent degradation. Ubiquitinated; promotes recycling back to the plasma membrane and confers a strong affinity for NOTCH1. Multi-ubiquitination of Lys-613 by MIB1 promotes both cis and trans-interaction with NOTCH1, as well as activation of Notch signaling. Ubiquitinated by NEURL1B. Post-translationally, phosphorylated in a membrane association-dependent manner. Phosphorylation at Ser-697 requires the presence of Ser-694, whereas phosphorylation at Ser-694 occurs independently of the other site. Phosphorylation is required for full ligand activity in vitro and affects surface presentation, ectodomain shedding, and endocytosis. O-fucosylated. Can be elongated to a disaccharide by MFNG. Expressed in heart and pancreas, with lower expression in brain and muscle and almost no expression in placenta, lung, liver and kidney.

The protein localises to the apical cell membrane. The protein resides in the cell junction. It is found in the adherens junction. It localises to the membrane raft. Transmembrane ligand protein of NOTCH1, NOTCH2 and NOTCH3 receptors that binds the extracellular domain (ECD) of Notch receptor in a cis and trans fashion manner. Following transinteraction, ligand cells produce mechanical force that depends of a clathrin-mediated endocytosis, requiring ligand ubiquitination, EPN1 interaction, and actin polymerisation; these events promote Notch receptor extracellular domain (NECD) transendocytosis and triggers Notch signaling through induction of cleavage, hyperphosphorylation, and nuclear accumulation of the intracellular domain of Notch receptors (NICD). Is required for embryonic development and maintenance of adult stem cells in many different tissues and immune systeme; the DLL1-induced Notch signaling is mediated through an intercellular communication that regulates cell lineage, cell specification, cell patterning and morphogenesis through effects on differentiation and proliferation. Plays a role in brain development at different level, namely by regulating neuronal differentiation of neural precursor cells via cell-cell interaction, most likely through the lateral inhibitory system in an endogenous level dependent-manner. During neocortex development, Dll1-Notch signaling transmission is mediated by dynamic interactions between intermediate neurogenic progenitors and radial glia; the cell-cell interactions are mediated via dynamic and transient elongation processes, likely to reactivate/maintain Notch activity in neighboring progenitors, and coordinate progenitor cell division and differentiation across radial and zonal boundaries. During cerebellar development, regulates Bergmann glial monolayer formation and its morphological maturation through a Notch signaling pathway. At the retina and spinal cord level, regulates neurogenesis by preventing the premature differentiation of neural progenitors and also by maintaining progenitors in spinal cord through Notch signaling pathway. Also controls neurogenesis of the neural tube in a progenitor domain-specific fashion along the dorsoventral axis. Maintains quiescence of neural stem cells and plays a role as a fate determinant that segregates asymmetrically to one daughter cell during neural stem cells mitosis, resulting in neuronal differentiation in Dll1-inheriting cell. Plays a role in immune systeme development, namely the development of all T-cells and marginal zone (MZ) B-cells. Blocks the differentiation of progenitor cells into the B-cell lineage while promoting the emergence of a population of cells with the characteristics of a T-cell/NK-cell precursor. Also plays a role during muscle development. During early development, inhibits myoblasts differentiation from the medial dermomyotomal lip and later regulates progenitor cell differentiation. Directly modulates cell adhesion and basal lamina formation in satellite cells through Notch signaling. Maintains myogenic progenitors pool by suppressing differentiation through down-regulation of MYOD1 and is required for satellite cell homing and PAX7 expression. During craniofacial and trunk myogenesis suppresses differentiation of cranial mesoderm-derived and somite-derived muscle via MYOD1 regulation but in cranial mesoderm-derived progenitors, is neither required for satellite cell homing nor for PAX7 expression. Also plays a role during pancreatic cell development. During type B pancreatic cell development, may be involved in the initiation of proximodistal patterning in the early pancreatic epithelium. Stimulates multipotent pancreatic progenitor cells proliferation and pancreatic growth by maintaining HES1 expression and PTF1A protein levels. During fetal stages of development, is required to maintain arterial identity and the responsiveness of arterial endothelial cells for VEGFA through regulation of KDR activation and NRP1 expression. Controls sprouting angiogenesis and subsequent vertical branch formation through regulation on tip cell differentiation. Negatively regulates goblet cell differentiation in intestine and controls secretory fat commitment through lateral inhibition in small intestine. Plays a role during inner ear development; negatively regulates auditory hair cell differentiation. Plays a role during nephron development through Notch signaling pathway. Regulates growth, blood pressure and energy homeostasis. This is Delta-like protein 1 from Homo sapiens (Human).